A 546-amino-acid polypeptide reads, in one-letter code: 2-isopropylmalate synthase (546 aa).

Residues 8–271 (ILIFDTTLRD…NSFFKRNPDS (264 aa)) enclose the Pyruvate carboxyltransferase domain. Mn(2+) contacts are provided by aspartate 17, histidine 208, histidine 210, and asparagine 244. The regulatory domain stretch occupies residues 408 to 546 (QLSLVQVSCG…NNTYISNPAN (139 aa)).

Belongs to the alpha-IPM synthase/homocitrate synthase family. LeuA type 1 subfamily. Homodimer. The cofactor is Mn(2+).

The protein localises to the cytoplasm. It catalyses the reaction 3-methyl-2-oxobutanoate + acetyl-CoA + H2O = (2S)-2-isopropylmalate + CoA + H(+). Its pathway is amino-acid biosynthesis; L-leucine biosynthesis; L-leucine from 3-methyl-2-oxobutanoate: step 1/4. Its function is as follows. Catalyzes the condensation of the acetyl group of acetyl-CoA with 3-methyl-2-oxobutanoate (2-ketoisovalerate) to form 3-carboxy-3-hydroxy-4-methylpentanoate (2-isopropylmalate). The polypeptide is 2-isopropylmalate synthase (Prochlorococcus marinus (strain MIT 9301)).